We begin with the raw amino-acid sequence, 497 residues long: MYSDSEDESSELSTVLSMFEEKEFTRQYTVLKTLSQHGTTEVRLCSHHLTGVTVAVKALKYQRWWEPKVSEVEIMKMLSHPNIVSLLQVIETEQNIYLIMEVAQGTQLHNRVQEARCLKEDEARSIFVQLLSAIGYCHGEGVVHRDLKPDNVIVDEHGNVKIVDFGLGARFMPGQKLERLCGAFQFIPPEIFLGLPYDGPKVDIWALGVLLYYMVTGIFPFVGSTLSEISKEVLQGRYEIPYNLSKDLRSMIGLLLATNARQRPTAQDLLSHPWLQEGEKTITFHSNGDTSFPDPDIMAAMKNIGFHVQDIRESLKHRKFDETMATYNLLRAEACQDDGNYVQTKLMNPGMPPFPSVTDSGAFSLPPRRRASEPSFKVLVSSTEEHQLRQTGGTNAPFPPKKTPTMGRSQKQKRAMTAPCICLLRNTYIDTEDSSFCTSSQAEKTSSDPEKSETSTSCPLTPRGWRKWKKRIVACIQTLCCCTLPQKKCPRSVHPQK.

Positions 28 to 275 (YTVLKTLSQH…AQDLLSHPWL (248 aa)) constitute a Protein kinase domain. Residues 34–42 (LSQHGTTEV) and Lys57 each bind ATP. Catalysis depends on Asp146, which acts as the Proton acceptor. Residues 292–332 (FPDPDIMAAMKNIGFHVQDIRESLKHRKFDETMATYNLLRA) enclose the UBA domain. 2 disordered regions span residues 383–410 (TEEH…GRSQ) and 439–460 (SSQA…SCPL).

This sequence belongs to the protein kinase superfamily. CAMK Ser/Thr protein kinase family. Smok subfamily.

It carries out the reaction L-seryl-[protein] + ATP = O-phospho-L-seryl-[protein] + ADP + H(+). It catalyses the reaction L-threonyl-[protein] + ATP = O-phospho-L-threonyl-[protein] + ADP + H(+). Functionally, may play a role in sperm motility, especially in the regulation of flagellar function. This is Sperm motility kinase Z (Gm4922) from Mus musculus (Mouse).